The sequence spans 87 residues: Acyl carrier protein TtuC (87 aa).

A Carrier domain is found at 11-87 (ITAEDVQQWL…HALSQFIAAK (77 aa)). The residue at position 48 (Ser-48) is an O-(pantetheine 4'-phosphoryl)serine.

The cofactor is pantetheine 4'-phosphate.

Functionally, carrier protein likely involved in the biosynthesis of a polyyne metabolite. Accepts as substrate the activated form of decanoic acid from TtuA. This chain is Acyl carrier protein TtuC, found in Teredinibacter turnerae (strain ATCC 39867 / T7901).